The following is a 347-amino-acid chain: Ribosomal RNA large subunit methyltransferase M (347 aa).

S-adenosyl-L-methionine contacts are provided by residues Ser-184, 217–220 (APGG), Asp-236, Asp-256, and Asp-272. Lys-301 serves as the catalytic Proton acceptor.

This sequence belongs to the class I-like SAM-binding methyltransferase superfamily. RNA methyltransferase RlmE family. RlmM subfamily. Monomer.

Its subcellular location is the cytoplasm. The enzyme catalyses cytidine(2498) in 23S rRNA + S-adenosyl-L-methionine = 2'-O-methylcytidine(2498) in 23S rRNA + S-adenosyl-L-homocysteine + H(+). Its function is as follows. Catalyzes the 2'-O-methylation at nucleotide C2498 in 23S rRNA. In Xanthomonas oryzae pv. oryzae (strain MAFF 311018), this protein is Ribosomal RNA large subunit methyltransferase M.